The primary structure comprises 95 residues: MGLRYSREVKQRYGEKELEGRIPITLDMPQTLYGRYNCKSCWFANKGLIKCSNHYLCLKCLTAMLSRSDYCGICGGILPKKLVFETTPSAPPYTP.

Gly2 carries the N-myristoyl glycine; by host lipid modification. An RING-type; atypical zinc finger spans residues 38 to 74; that stretch reads CKSCWFANKGLIKCSNHYLCLKCLTAMLSRSDYCGIC. The PTAP/PSAP motif motif lies at 88 to 91; that stretch reads PSAP.

Belongs to the arenaviridae Z protein family. As to quaternary structure, interacts with protein NP; this interaction probably directs the encapsidated genome to budding sites. Interacts (via RING domain) with polymerase L; this interaction inhibits viral transcription and replication, Z partially blocks the product exit tunnel for the releasing nascent RNA product. Interacts with the glycoprotein complex; this interaction plays a role in virion budding. Interacts with host eIF4E; this interaction results in eIF4E reduced affinity for its substrate, the 5'-m7 G cap structure. Interacts (via late-budding domain) with host TSG101; this interaction is essential for budding and release of viral particles. Interacts with host RPLP0; this interaction may serve to load ribosome-like particles inside the virion. Interacts with host PML; this interaction induces PML bodies redistribution in the cytoplasm upon viral infection. Myristoylation is required for the role of RING finger protein Z in assembly and budding.

The protein resides in the virion. It is found in the host cytoplasm. It localises to the host perinuclear region. Its subcellular location is the host cell membrane. Its function is as follows. Plays a crucial role in virion assembly and budding. Expressed late in the virus life cycle, it acts as an inhibitor of viral transcription and RNA synthesis by interacting with the viral polymerase L. Presumably recruits the NP encapsidated genome to cellular membranes at budding sites via direct interaction with NP. Plays critical roles in the final steps of viral release by interacting with host TSG101, a member of the vacuolar protein-sorting pathway and using other cellular host proteins involved in vesicle formation pathway. The budding of the virus progeny occurs after association of protein Z with the viral glycoprotein complex SSP-GP1-GP2 at the cell periphery, step that requires myristoylation of protein Z. Also selectively represses protein production by associating with host eIF4E. In cell-based minigenome assay, has an inhibitory effect on the ribonucleoprotein machinery (vRNP), which is responsible for the replication and transcription of the viral genome. This chain is RING finger protein Z, found in Bear Canyon mammarenavirus (isolate Mouse/United States/AV A0070039/2000) (BCNV).